The following is a 396-amino-acid chain: Tryptophan synthase beta chain (396 aa).

K88 bears the N6-(pyridoxal phosphate)lysine mark.

Belongs to the TrpB family. In terms of assembly, tetramer of two alpha and two beta chains. Requires pyridoxal 5'-phosphate as cofactor.

The enzyme catalyses (1S,2R)-1-C-(indol-3-yl)glycerol 3-phosphate + L-serine = D-glyceraldehyde 3-phosphate + L-tryptophan + H2O. Its pathway is amino-acid biosynthesis; L-tryptophan biosynthesis; L-tryptophan from chorismate: step 5/5. Functionally, the beta subunit is responsible for the synthesis of L-tryptophan from indole and L-serine. The sequence is that of Tryptophan synthase beta chain from Shewanella sp. (strain MR-7).